A 463-amino-acid polypeptide reads, in one-letter code: Glycine--tRNA ligase (463 aa).

R98 and E174 together coordinate substrate. Residues 206 to 208 (RNE), 216 to 221 (FRTREF), 290 to 291 (EL), and 334 to 337 (GADR) each bind ATP. 221 to 225 (FEQME) serves as a coordination point for substrate. Residue 330 to 334 (EPSLG) participates in substrate binding.

It belongs to the class-II aminoacyl-tRNA synthetase family. In terms of assembly, homodimer.

It is found in the cytoplasm. The catalysed reaction is tRNA(Gly) + glycine + ATP = glycyl-tRNA(Gly) + AMP + diphosphate. Its function is as follows. Catalyzes the attachment of glycine to tRNA(Gly). This Staphylococcus aureus (strain bovine RF122 / ET3-1) protein is Glycine--tRNA ligase.